The chain runs to 180 residues: uncharacterized protein (180 aa).

The protein resides in the mitochondrion. This is an uncharacterized protein from Marchantia polymorpha (Common liverwort).